We begin with the raw amino-acid sequence, 242 residues long: UPF0273 protein MJ1359 (242 aa).

The region spanning 2–242 is the KaiC domain; sequence KRVKTGIPGM…VYPDKVLKLR (241 aa). Position 29-36 (29-36) interacts with ATP; the sequence is GGPGTGKS.

Belongs to the UPF0273 family.

In Methanocaldococcus jannaschii (strain ATCC 43067 / DSM 2661 / JAL-1 / JCM 10045 / NBRC 100440) (Methanococcus jannaschii), this protein is UPF0273 protein MJ1359.